The chain runs to 776 residues: DNA topoisomerase 1 (776 aa).

One can recognise a Toprim domain in the interval 1-111 (MKLVIVESPA…VESDDFFKRV (111 aa)). Residues E7 and D80 each contribute to the Mg(2+) site. In terms of domain architecture, Topo IA-type catalytic spans 132-568 (DTNLVNAQQA…FWRGFNHNIE (437 aa)). Positions 166–171 (SAGRVQ) are interaction with DNA. Y304 serves as the catalytic O-(5'-phospho-DNA)-tyrosine intermediate. The C4-type zinc-finger motif lies at 600 to 627 (CPSCKTGQLSLKLGKFGAFLACSNYPEC).

The protein belongs to the type IA topoisomerase family. Monomer. Requires Mg(2+) as cofactor.

It carries out the reaction ATP-independent breakage of single-stranded DNA, followed by passage and rejoining.. In terms of biological role, releases the supercoiling and torsional tension of DNA, which is introduced during the DNA replication and transcription, by transiently cleaving and rejoining one strand of the DNA duplex. Introduces a single-strand break via transesterification at a target site in duplex DNA. The scissile phosphodiester is attacked by the catalytic tyrosine of the enzyme, resulting in the formation of a DNA-(5'-phosphotyrosyl)-enzyme intermediate and the expulsion of a 3'-OH DNA strand. The free DNA strand then undergoes passage around the unbroken strand, thus removing DNA supercoils. Finally, in the religation step, the DNA 3'-OH attacks the covalent intermediate to expel the active-site tyrosine and restore the DNA phosphodiester backbone. The polypeptide is DNA topoisomerase 1 (Rickettsia prowazekii (strain Madrid E)).